The chain runs to 347 residues: Phenylalanine--tRNA ligase alpha subunit (347 aa).

E265 is a binding site for Mg(2+).

This sequence belongs to the class-II aminoacyl-tRNA synthetase family. Phe-tRNA synthetase alpha subunit type 1 subfamily. In terms of assembly, tetramer of two alpha and two beta subunits. The cofactor is Mg(2+).

It is found in the cytoplasm. It carries out the reaction tRNA(Phe) + L-phenylalanine + ATP = L-phenylalanyl-tRNA(Phe) + AMP + diphosphate + H(+). The protein is Phenylalanine--tRNA ligase alpha subunit of Mycolicibacterium paratuberculosis (strain ATCC BAA-968 / K-10) (Mycobacterium paratuberculosis).